The following is a 241-amino-acid chain: ATP synthase subunit a (241 aa).

Transmembrane regions (helical) follow at residues 30–50 (GQVFMTSWLLIGALLTLVVVG), 91–111 (FIGTLFLFIFVSNWGGALVPW), 128–148 (INTTVALALLVSLSYFYAGLS), 193–213 (LVVAVLVFLVPLVLPVPVMFL), and 214–234 (GLFTSAIQALIFATLAAYYIG).

Belongs to the ATPase A chain family. In terms of assembly, F-type ATPases have 2 components, CF(1) - the catalytic core - and CF(0) - the membrane proton channel. CF(1) has five subunits: alpha(3), beta(3), gamma(1), delta(1), epsilon(1). CF(0) has four main subunits: a, b, b' and c.

The protein localises to the cellular thylakoid membrane. Key component of the proton channel; it plays a direct role in the translocation of protons across the membrane. The chain is ATP synthase subunit a from Prochlorococcus marinus (strain MIT 9211).